The following is a 205-amino-acid chain: V-type ATP synthase subunit E (205 aa).

Belongs to the V-ATPase E subunit family.

Its function is as follows. Produces ATP from ADP in the presence of a proton gradient across the membrane. The chain is V-type ATP synthase subunit E from Treponema denticola (strain ATCC 35405 / DSM 14222 / CIP 103919 / JCM 8153 / KCTC 15104).